The primary structure comprises 355 residues: Tryptophan--tRNA ligase (355 aa).

ATP-binding positions include 13 to 15 (QPT) and 21 to 22 (GN). The 'HIGH' region signature appears at 14–22 (PTGNLHLGN). Asp137 contacts L-tryptophan. Residues 149–151 (GED), Ile208, and 217–221 (KMSKS) each bind ATP. A 'KMSKS' region motif is present at residues 217-221 (KMSKS).

It belongs to the class-I aminoacyl-tRNA synthetase family. In terms of assembly, homodimer.

It localises to the cytoplasm. The enzyme catalyses tRNA(Trp) + L-tryptophan + ATP = L-tryptophyl-tRNA(Trp) + AMP + diphosphate + H(+). Its function is as follows. Catalyzes the attachment of tryptophan to tRNA(Trp). The polypeptide is Tryptophan--tRNA ligase (Mesorhizobium japonicum (strain LMG 29417 / CECT 9101 / MAFF 303099) (Mesorhizobium loti (strain MAFF 303099))).